Consider the following 876-residue polypeptide: Leucine--tRNA ligase (876 aa).

The 'HIGH' region signature appears at 43 to 53 (PYPSGRIHMGH). Positions 632 to 636 (KMSKS) match the 'KMSKS' region motif. An ATP-binding site is contributed by K635.

It belongs to the class-I aminoacyl-tRNA synthetase family.

The protein resides in the cytoplasm. The catalysed reaction is tRNA(Leu) + L-leucine + ATP = L-leucyl-tRNA(Leu) + AMP + diphosphate. In Agrobacterium fabrum (strain C58 / ATCC 33970) (Agrobacterium tumefaciens (strain C58)), this protein is Leucine--tRNA ligase.